A 451-amino-acid polypeptide reads, in one-letter code: FAD-dependent monooxygenase adrH (451 aa).

Residues glutamate 39, glycine 53, and arginine 112 each contribute to the FAD site. The active site involves tyrosine 196. The FAD site is built by aspartate 288 and alanine 301. A glycan (N-linked (GlcNAc...) asparagine) is linked at asparagine 385. The chain crosses the membrane as a helical span at residues 426-446 (TLLWVSSLALFLFFPWLGSYL).

The protein belongs to the paxM FAD-dependent monooxygenase family. FAD is required as a cofactor.

The protein resides in the membrane. The protein operates within secondary metabolite biosynthesis; terpenoid biosynthesis. FAD-dependent monooxygenase; part of the gene cluster that mediates the biosynthesis of andrastins, meroterpenoid compounds that exhibit inhibitory activity against ras farnesyltransferase, suggesting that they could be promising leads for antitumor agents. The first step of the pathway is the synthesis of 3,5-dimethylorsellinic acid (DMOA) by the polyketide synthase adrD via condensation of one acetyl-CoA starter unit with 3 malonyl-CoA units and 2 methylations. DMAO is then converted to farnesyl-DMAO by the prenyltransferase adrG. The methyltransferase adrK catalyzes the methylation of the carboxyl group of farnesyl-DMAO to farnesyl-DMAO methyl ester which is further converted to epoxyfarnesyl-DMAO methyl ester by the FAD-dependent monooxygenase adrH. The terpene cyclase adrI then catalyzes the carbon skeletal rearrangement to generate the andrastin E, the first compound in the pathway having the andrastin scaffold, with the tetracyclic ring system. The post-cyclization tailoring enzymes adrF, adrE, adrJ, and adrA, are involved in the conversion of andrastin E into andrastin A. The short chain dehydrogenase adrF is responsible for the oxidation of the C-3 a hydroxyl group of andrastin E to yield the corresponding ketone, andrastin D. The ketoreductase adrE stereoselectively reduces the carbonyl moiety to reverse the stereochemistry of the C-3 position to yield andrastin F. The acetyltransferase adrJ is the acetyltransferase that attaches the acetyl group to the C-3 hydroxyl group of andrastin F to yield andrastin C. Finally, the cytochrome P450 monooxygenase adrA catalyzes two sequential oxidation reactions of the C-23 methyl group, to generate the corresponding alcohol andrastin B, and aldehyde andrastin A. The polypeptide is FAD-dependent monooxygenase adrH (Penicillium rubens (strain ATCC 28089 / DSM 1075 / NRRL 1951 / Wisconsin 54-1255) (Penicillium chrysogenum)).